The chain runs to 198 residues: GTP cyclohydrolase-2 (198 aa).

A GTP-binding site is contributed by 52–56 (RMHSE). C57, C68, and C70 together coordinate Zn(2+). Residues Q73, 94–96 (EGR), and T116 each bind GTP. The active-site Proton acceptor is D128. R130 (nucleophile) is an active-site residue. Positions 151 and 156 each coordinate GTP.

It belongs to the GTP cyclohydrolase II family. The cofactor is Zn(2+).

The catalysed reaction is GTP + 4 H2O = 2,5-diamino-6-hydroxy-4-(5-phosphoribosylamino)-pyrimidine + formate + 2 phosphate + 3 H(+). Its pathway is cofactor biosynthesis; riboflavin biosynthesis; 5-amino-6-(D-ribitylamino)uracil from GTP: step 1/4. In terms of biological role, catalyzes the conversion of GTP to 2,5-diamino-6-ribosylamino-4(3H)-pyrimidinone 5'-phosphate (DARP), formate and pyrophosphate. In Vibrio cholerae serotype O1 (strain ATCC 39315 / El Tor Inaba N16961), this protein is GTP cyclohydrolase-2.